The sequence spans 368 residues: Dihydroorotate dehydrogenase (quinone) (368 aa).

FMN is bound by residues 67–71 (AGFDK) and Thr-91. Lys-71 serves as a coordination point for substrate. 116 to 120 (NRMGF) contributes to the substrate binding site. FMN-binding residues include Asn-146 and Asn-179. Substrate is bound at residue Asn-179. Ser-182 functions as the Nucleophile in the catalytic mechanism. Asn-184 lines the substrate pocket. 2 residues coordinate FMN: Lys-222 and Thr-250. Position 251-252 (251-252 (NT)) interacts with substrate. Residues Gly-276, Gly-305, and 326-327 (YS) each bind FMN.

It belongs to the dihydroorotate dehydrogenase family. Type 2 subfamily. As to quaternary structure, monomer. Requires FMN as cofactor.

The protein resides in the cell membrane. The catalysed reaction is (S)-dihydroorotate + a quinone = orotate + a quinol. The protein operates within pyrimidine metabolism; UMP biosynthesis via de novo pathway; orotate from (S)-dihydroorotate (quinone route): step 1/1. Functionally, catalyzes the conversion of dihydroorotate to orotate with quinone as electron acceptor. This chain is Dihydroorotate dehydrogenase (quinone), found in Streptomyces avermitilis (strain ATCC 31267 / DSM 46492 / JCM 5070 / NBRC 14893 / NCIMB 12804 / NRRL 8165 / MA-4680).